Reading from the N-terminus, the 337-residue chain is Receptor like protein kinase S.3 (337 aa).

The Protein kinase domain maps to 50–316; sequence FKESELFGTE…VNYLEGNDVL (267 aa). Residues 56–64 and K78 each bind ATP; that span reads FGTEANGTV. Y123 is subject to Phosphotyrosine. The Proton acceptor role is filled by D171.

It belongs to the protein kinase superfamily. Ser/Thr protein kinase family.

The catalysed reaction is L-seryl-[protein] + ATP = O-phospho-L-seryl-[protein] + ADP + H(+). It carries out the reaction L-threonyl-[protein] + ATP = O-phospho-L-threonyl-[protein] + ADP + H(+). This Arabidopsis thaliana (Mouse-ear cress) protein is Receptor like protein kinase S.3 (LECRKS3).